The primary structure comprises 155 residues: Small ribosomal subunit protein uS7c (155 aa).

Belongs to the universal ribosomal protein uS7 family. Part of the 30S ribosomal subunit.

Its subcellular location is the plastid. The protein resides in the chloroplast. In terms of biological role, one of the primary rRNA binding proteins, it binds directly to 16S rRNA where it nucleates assembly of the head domain of the 30S subunit. In Staurastrum punctulatum (Green alga), this protein is Small ribosomal subunit protein uS7c (rps7).